Consider the following 318-residue polypeptide: NADH-ubiquinone oxidoreductase chain 1 (318 aa).

8 helical membrane-spanning segments follow: residues 2-22 (FMIN…FLTL), 68-88 (ISMF…MWTP), 100-120 (LGVL…LWSG), 146-166 (LAII…PTLI), 171-191 (HMWL…STLA), 222-242 (LFFL…TILF), 253-273 (ELYT…FLWV), and 293-313 (FLPL…ITAG).

This sequence belongs to the complex I subunit 1 family. Core subunit of respiratory chain NADH dehydrogenase (Complex I) which is composed of 45 different subunits.

It is found in the mitochondrion inner membrane. The catalysed reaction is a ubiquinone + NADH + 5 H(+)(in) = a ubiquinol + NAD(+) + 4 H(+)(out). Core subunit of the mitochondrial membrane respiratory chain NADH dehydrogenase (Complex I) which catalyzes electron transfer from NADH through the respiratory chain, using ubiquinone as an electron acceptor. Essential for the catalytic activity and assembly of complex I. The polypeptide is NADH-ubiquinone oxidoreductase chain 1 (MT-ND1) (Hipposideros diadema (Diadem leaf-nosed bat)).